The following is a 100-amino-acid chain: Urease subunit gamma 1 (100 aa).

The protein belongs to the urease gamma subunit family. Heterotrimer of UreA (gamma), UreB (beta) and UreC (alpha) subunits. Three heterotrimers associate to form the active enzyme.

The protein resides in the cytoplasm. It catalyses the reaction urea + 2 H2O + H(+) = hydrogencarbonate + 2 NH4(+). The protein operates within nitrogen metabolism; urea degradation; CO(2) and NH(3) from urea (urease route): step 1/1. Disruption of the ure1 gene cluster suggests that it protects brucellae during their passage through the stomach. The major route of infection in human brucellosis is oral. This Brucella abortus (strain 2308) protein is Urease subunit gamma 1.